Consider the following 400-residue polypeptide: Dual-specificity RNA methyltransferase RlmN (400 aa).

E125 acts as the Proton acceptor in catalysis. The region spanning 131 to 372 is the Radical SAM core domain; sequence ETDRGTLCVS…VRTPRGRDIL (242 aa). C138 and C375 are joined by a disulfide. Residues C145, C149, and C152 each contribute to the [4Fe-4S] cluster site. S-adenosyl-L-methionine contacts are provided by residues 201 to 202, S233, 255 to 257, and N332; these read GE and SLH. The active-site S-methylcysteine intermediate is the C375.

It belongs to the radical SAM superfamily. RlmN family. [4Fe-4S] cluster is required as a cofactor.

Its subcellular location is the cytoplasm. The catalysed reaction is adenosine(2503) in 23S rRNA + 2 reduced [2Fe-2S]-[ferredoxin] + 2 S-adenosyl-L-methionine = 2-methyladenosine(2503) in 23S rRNA + 5'-deoxyadenosine + L-methionine + 2 oxidized [2Fe-2S]-[ferredoxin] + S-adenosyl-L-homocysteine. It carries out the reaction adenosine(37) in tRNA + 2 reduced [2Fe-2S]-[ferredoxin] + 2 S-adenosyl-L-methionine = 2-methyladenosine(37) in tRNA + 5'-deoxyadenosine + L-methionine + 2 oxidized [2Fe-2S]-[ferredoxin] + S-adenosyl-L-homocysteine. Functionally, specifically methylates position 2 of adenine 2503 in 23S rRNA and position 2 of adenine 37 in tRNAs. m2A2503 modification seems to play a crucial role in the proofreading step occurring at the peptidyl transferase center and thus would serve to optimize ribosomal fidelity. This Bradyrhizobium diazoefficiens (strain JCM 10833 / BCRC 13528 / IAM 13628 / NBRC 14792 / USDA 110) protein is Dual-specificity RNA methyltransferase RlmN.